Here is a 145-residue protein sequence, read N- to C-terminus: D-aminoacyl-tRNA deacylase (145 aa).

Positions 137–138 (GP) match the Gly-cisPro motif, important for rejection of L-amino acids motif.

Belongs to the DTD family. In terms of assembly, homodimer.

Its subcellular location is the cytoplasm. It carries out the reaction glycyl-tRNA(Ala) + H2O = tRNA(Ala) + glycine + H(+). The enzyme catalyses a D-aminoacyl-tRNA + H2O = a tRNA + a D-alpha-amino acid + H(+). In terms of biological role, an aminoacyl-tRNA editing enzyme that deacylates mischarged D-aminoacyl-tRNAs. Also deacylates mischarged glycyl-tRNA(Ala), protecting cells against glycine mischarging by AlaRS. Acts via tRNA-based rather than protein-based catalysis; rejects L-amino acids rather than detecting D-amino acids in the active site. By recycling D-aminoacyl-tRNA to D-amino acids and free tRNA molecules, this enzyme counteracts the toxicity associated with the formation of D-aminoacyl-tRNA entities in vivo and helps enforce protein L-homochirality. The chain is D-aminoacyl-tRNA deacylase from Rhodococcus opacus (strain B4).